The chain runs to 471 residues: Putative multidrug resistance protein MdtD (471 aa).

The next 13 helical transmembrane spans lie at 12 to 32, 49 to 69, 77 to 97, 106 to 126, 138 to 158, 165 to 185, 197 to 217, 225 to 245, 263 to 285, 290 to 312, 342 to 362, 396 to 416, and 431 to 451; these read LWIV…VNTA, MVIV…GWLA, IFFT…QSST, VLQG…VMKI, FVTL…GLLV, WIFL…LWLM, FSGF…LDGY, AGLG…LWHA, FSLG…FMTP, IGLG…GSMG, LLFM…VMLF, MVMQ…LGAF, and IFFW…LVFA.

The protein belongs to the major facilitator superfamily. TCR/Tet family.

It localises to the cell inner membrane. This is Putative multidrug resistance protein MdtD from Cronobacter sakazakii (strain ATCC BAA-894) (Enterobacter sakazakii).